Here is a 237-residue protein sequence, read N- to C-terminus: Phosphoribosylaminoimidazole-succinocarboxamide synthase (237 aa).

This sequence belongs to the SAICAR synthetase family.

It catalyses the reaction 5-amino-1-(5-phospho-D-ribosyl)imidazole-4-carboxylate + L-aspartate + ATP = (2S)-2-[5-amino-1-(5-phospho-beta-D-ribosyl)imidazole-4-carboxamido]succinate + ADP + phosphate + 2 H(+). It functions in the pathway purine metabolism; IMP biosynthesis via de novo pathway; 5-amino-1-(5-phospho-D-ribosyl)imidazole-4-carboxamide from 5-amino-1-(5-phospho-D-ribosyl)imidazole-4-carboxylate: step 1/2. In Alteromonas mediterranea (strain DSM 17117 / CIP 110805 / LMG 28347 / Deep ecotype), this protein is Phosphoribosylaminoimidazole-succinocarboxamide synthase.